The primary structure comprises 334 residues: Transaldolase (334 aa).

N-acetylserine is present on S2. Catalysis depends on K143, which acts as the Schiff-base intermediate with substrate.

Belongs to the transaldolase family. Type 1 subfamily. As to quaternary structure, homodimer.

The catalysed reaction is D-sedoheptulose 7-phosphate + D-glyceraldehyde 3-phosphate = D-erythrose 4-phosphate + beta-D-fructose 6-phosphate. Its pathway is carbohydrate degradation; pentose phosphate pathway; D-glyceraldehyde 3-phosphate and beta-D-fructose 6-phosphate from D-ribose 5-phosphate and D-xylulose 5-phosphate (non-oxidative stage): step 2/3. Its function is as follows. Transaldolase is important for the balance of metabolites in the pentose-phosphate pathway. In Kluyveromyces lactis (strain ATCC 8585 / CBS 2359 / DSM 70799 / NBRC 1267 / NRRL Y-1140 / WM37) (Yeast), this protein is Transaldolase (TAL1).